The following is a 361-amino-acid chain: Phospho-N-acetylmuramoyl-pentapeptide-transferase (361 aa).

Helical transmembrane passes span Arg25 to Ile45, Thr73 to Leu93, Val98 to Ile118, Ile139 to Thr159, Ile168 to Phe188, Gly200 to Ser220, Ala237 to Phe257, Val264 to Ile284, Met289 to Val309, and Val339 to Lys359.

This sequence belongs to the glycosyltransferase 4 family. MraY subfamily. The cofactor is Mg(2+).

The protein localises to the cell inner membrane. The enzyme catalyses UDP-N-acetyl-alpha-D-muramoyl-L-alanyl-gamma-D-glutamyl-meso-2,6-diaminopimeloyl-D-alanyl-D-alanine + di-trans,octa-cis-undecaprenyl phosphate = di-trans,octa-cis-undecaprenyl diphospho-N-acetyl-alpha-D-muramoyl-L-alanyl-D-glutamyl-meso-2,6-diaminopimeloyl-D-alanyl-D-alanine + UMP. It participates in cell wall biogenesis; peptidoglycan biosynthesis. Catalyzes the initial step of the lipid cycle reactions in the biosynthesis of the cell wall peptidoglycan: transfers peptidoglycan precursor phospho-MurNAc-pentapeptide from UDP-MurNAc-pentapeptide onto the lipid carrier undecaprenyl phosphate, yielding undecaprenyl-pyrophosphoryl-MurNAc-pentapeptide, known as lipid I. In Xanthomonas oryzae pv. oryzae (strain MAFF 311018), this protein is Phospho-N-acetylmuramoyl-pentapeptide-transferase.